Here is a 194-residue protein sequence, read N- to C-terminus: Lymphocyte antigen 6 complex locus protein G5b (194 aa).

Residues 1-18 form the signal peptide; it reads MRARVLVGMLTMVGFAMG. The UPAR/Ly6 domain maps to 26–118; the sequence is RTCHLCLLED…SAQHQSTLRG (93 aa). 5 cysteine pairs are disulfide-bonded: Cys28-Cys55, Cys31-Cys40, Cys47-Cys73, Cys81-Cys98, and Cys99-Cys104. Asn63 is a glycosylation site (N-linked (GlcNAc...) asparagine). Asn141 carries an N-linked (GlcNAc...) asparagine glycan.

As to quaternary structure, monomer. Post-translationally, N-glycosylated.

Its subcellular location is the secreted. The polypeptide is Lymphocyte antigen 6 complex locus protein G5b (Ly6g5b) (Mus musculus (Mouse)).